Consider the following 641-residue polypeptide: Chaperone protein DnaK (641 aa).

Thr199 carries the post-translational modification Phosphothreonine; by autocatalysis. Positions 603 to 613 are enriched in polar residues; sequence YTQQGGTAGSE. Positions 603-641 are disordered; the sequence is YTQQGGTAGSETHSHEKAGGSGGDDVVDAEFEEVRDDKR. Residues 627–641 show a composition bias toward acidic residues; it reads DVVDAEFEEVRDDKR.

The protein belongs to the heat shock protein 70 family.

In terms of biological role, acts as a chaperone. In Methylococcus capsulatus (strain ATCC 33009 / NCIMB 11132 / Bath), this protein is Chaperone protein DnaK.